The chain runs to 274 residues: Hydroxyethylthiazole kinase (274 aa).

Residue Met46 participates in substrate binding. Positions 122 and 173 each coordinate ATP. Position 200 (Gly200) interacts with substrate.

It belongs to the Thz kinase family. The cofactor is Mg(2+).

The enzyme catalyses 5-(2-hydroxyethyl)-4-methylthiazole + ATP = 4-methyl-5-(2-phosphooxyethyl)-thiazole + ADP + H(+). Its pathway is cofactor biosynthesis; thiamine diphosphate biosynthesis; 4-methyl-5-(2-phosphoethyl)-thiazole from 5-(2-hydroxyethyl)-4-methylthiazole: step 1/1. Catalyzes the phosphorylation of the hydroxyl group of 4-methyl-5-beta-hydroxyethylthiazole (THZ). The protein is Hydroxyethylthiazole kinase of Clostridium tetani (strain Massachusetts / E88).